Reading from the N-terminus, the 510-residue chain is Secreted RxLR effector protein 24 (510 aa).

Positions M1–A18 are cleaved as a signal peptide. The RxLR-dEER signature appears at R47 to R68.

This sequence belongs to the RxLR effector family.

It is found in the secreted. The protein localises to the host nucleus. Functionally, secreted effector that acts as an elicitor that induces cell death in host plant cells. The chain is Secreted RxLR effector protein 24 from Plasmopara viticola (Downy mildew of grapevine).